A 257-amino-acid polypeptide reads, in one-letter code: Imidazole glycerol phosphate synthase subunit HisF (257 aa).

Catalysis depends on residues Asp-11 and Asp-130.

The protein belongs to the HisA/HisF family. As to quaternary structure, heterodimer of HisH and HisF.

The protein resides in the cytoplasm. The enzyme catalyses 5-[(5-phospho-1-deoxy-D-ribulos-1-ylimino)methylamino]-1-(5-phospho-beta-D-ribosyl)imidazole-4-carboxamide + L-glutamine = D-erythro-1-(imidazol-4-yl)glycerol 3-phosphate + 5-amino-1-(5-phospho-beta-D-ribosyl)imidazole-4-carboxamide + L-glutamate + H(+). Its pathway is amino-acid biosynthesis; L-histidine biosynthesis; L-histidine from 5-phospho-alpha-D-ribose 1-diphosphate: step 5/9. Functionally, IGPS catalyzes the conversion of PRFAR and glutamine to IGP, AICAR and glutamate. The HisF subunit catalyzes the cyclization activity that produces IGP and AICAR from PRFAR using the ammonia provided by the HisH subunit. The sequence is that of Imidazole glycerol phosphate synthase subunit HisF from Tolumonas auensis (strain DSM 9187 / NBRC 110442 / TA 4).